Consider the following 1192-residue polypeptide: Protein argonaute 13 (1192 aa).

The PAZ domain maps to 183-296; it reads TVIQFVEEFL…LPMEVCKIVE (114 aa). Positions 472–770 constitute a Piwi domain; the sequence is LLIVILLEVS…AASHAHCCIK (299 aa).

Belongs to the argonaute family. Ago subfamily.

Probably involved in the RNA silencing pathway. May bind to short RNAs such as microRNAs (miRNAs) or short interfering RNAs (siRNAs), and represses the translation of mRNAs which are complementary to them. This Oryza sativa subsp. japonica (Rice) protein is Protein argonaute 13 (AGO13).